The sequence spans 510 residues: NAD(P)H-quinone oxidoreductase subunit 2 B, chloroplastic (510 aa).

Helical transmembrane passes span 24-44 (LLLFDGSFIFPECILIFGLIL), 57-77 (IPWLYFISSTSLVMSITALLF), 99-119 (IFQFLILLCSTLCIPLSVEYI), 124-144 (MAIAEFLLFVLTATLGGMFLC), 149-169 (LITIFVAPECFSLCSYLLSGY), 183-203 (YLLMGGASSSILVHGFSWLYG), 227-247 (PGISIALIFITVGIGFKLSPA), 295-315 (WHLLLEILAILSMILGNLIAI), 323-343 (MLAYSSIGQIGYVIIGIIVGD), 354-374 (YMLFYISMNLGTFACIVLFGL), 395-415 (ALSLALCLLSLGGLPPLAGFF), 418-438 (LHLFWCGWQAGLYFLVSIGLL), and 484-504 (MIVCVIASTIPGISMNPIIAI).

Belongs to the complex I subunit 2 family. NDH is composed of at least 16 different subunits, 5 of which are encoded in the nucleus.

Its subcellular location is the plastid. The protein localises to the chloroplast thylakoid membrane. The enzyme catalyses a plastoquinone + NADH + (n+1) H(+)(in) = a plastoquinol + NAD(+) + n H(+)(out). It carries out the reaction a plastoquinone + NADPH + (n+1) H(+)(in) = a plastoquinol + NADP(+) + n H(+)(out). In terms of biological role, NDH shuttles electrons from NAD(P)H:plastoquinone, via FMN and iron-sulfur (Fe-S) centers, to quinones in the photosynthetic chain and possibly in a chloroplast respiratory chain. The immediate electron acceptor for the enzyme in this species is believed to be plastoquinone. Couples the redox reaction to proton translocation, and thus conserves the redox energy in a proton gradient. In Gossypium hirsutum (Upland cotton), this protein is NAD(P)H-quinone oxidoreductase subunit 2 B, chloroplastic.